Consider the following 207-residue polypeptide: Thiamine-phosphate synthase (207 aa).

4-amino-2-methyl-5-(diphosphooxymethyl)pyrimidine is bound by residues 37–41 (QYRHK) and N69. 2 residues coordinate Mg(2+): D70 and D89. S108 and K138 together coordinate 4-amino-2-methyl-5-(diphosphooxymethyl)pyrimidine. 2-[(2R,5Z)-2-carboxy-4-methylthiazol-5(2H)-ylidene]ethyl phosphate is bound by residues G165 and 185–186 (IS).

The protein belongs to the thiamine-phosphate synthase family. Requires Mg(2+) as cofactor.

The enzyme catalyses 2-[(2R,5Z)-2-carboxy-4-methylthiazol-5(2H)-ylidene]ethyl phosphate + 4-amino-2-methyl-5-(diphosphooxymethyl)pyrimidine + 2 H(+) = thiamine phosphate + CO2 + diphosphate. The catalysed reaction is 2-(2-carboxy-4-methylthiazol-5-yl)ethyl phosphate + 4-amino-2-methyl-5-(diphosphooxymethyl)pyrimidine + 2 H(+) = thiamine phosphate + CO2 + diphosphate. It carries out the reaction 4-methyl-5-(2-phosphooxyethyl)-thiazole + 4-amino-2-methyl-5-(diphosphooxymethyl)pyrimidine + H(+) = thiamine phosphate + diphosphate. It functions in the pathway cofactor biosynthesis; thiamine diphosphate biosynthesis; thiamine phosphate from 4-amino-2-methyl-5-diphosphomethylpyrimidine and 4-methyl-5-(2-phosphoethyl)-thiazole: step 1/1. In terms of biological role, condenses 4-methyl-5-(beta-hydroxyethyl)thiazole monophosphate (THZ-P) and 2-methyl-4-amino-5-hydroxymethyl pyrimidine pyrophosphate (HMP-PP) to form thiamine monophosphate (TMP). The chain is Thiamine-phosphate synthase from Janthinobacterium sp. (strain Marseille) (Minibacterium massiliensis).